The sequence spans 226 residues: Glycerol-3-phosphate acyltransferase (226 aa).

Helical transmembrane passes span 1–21 (MGFWLSLCGAVVLVAYLLGSF), 60–80 (FVLGLDCLKGVLAIALVYYLF), 102–122 (LVTLAGIAAILGHSKSIFLGF), 134–154 (ILLAMNWQVGLATFGVFAVVV), 159–178 (IVSLSSIMGAIAVSIVMVFL), and 182–197 (LPYILFGIAGGLYVIL).

This sequence belongs to the PlsY family. In terms of assembly, probably interacts with PlsX.

It localises to the cell inner membrane. The enzyme catalyses an acyl phosphate + sn-glycerol 3-phosphate = a 1-acyl-sn-glycero-3-phosphate + phosphate. Its pathway is lipid metabolism; phospholipid metabolism. Catalyzes the transfer of an acyl group from acyl-phosphate (acyl-PO(4)) to glycerol-3-phosphate (G3P) to form lysophosphatidic acid (LPA). This enzyme utilizes acyl-phosphate as fatty acyl donor, but not acyl-CoA or acyl-ACP. This Nostoc sp. (strain PCC 7120 / SAG 25.82 / UTEX 2576) protein is Glycerol-3-phosphate acyltransferase.